The chain runs to 500 residues: Glutamyl-tRNA(Gln) amidotransferase subunit A (500 aa).

Catalysis depends on charge relay system residues lysine 93 and serine 168. Serine 192 functions as the Acyl-ester intermediate in the catalytic mechanism.

This sequence belongs to the amidase family. GatA subfamily. Heterotrimer of A, B and C subunits.

It catalyses the reaction L-glutamyl-tRNA(Gln) + L-glutamine + ATP + H2O = L-glutaminyl-tRNA(Gln) + L-glutamate + ADP + phosphate + H(+). Its function is as follows. Allows the formation of correctly charged Gln-tRNA(Gln) through the transamidation of misacylated Glu-tRNA(Gln) in organisms which lack glutaminyl-tRNA synthetase. The reaction takes place in the presence of glutamine and ATP through an activated gamma-phospho-Glu-tRNA(Gln). The protein is Glutamyl-tRNA(Gln) amidotransferase subunit A of Corynebacterium jeikeium (strain K411).